We begin with the raw amino-acid sequence, 459 residues long: Methylenetetrahydrofolate--tRNA-(uracil-5-)-methyltransferase TrmFO (459 aa).

11–16 (GAGLAG) is a binding site for FAD.

It belongs to the MnmG family. TrmFO subfamily. Requires FAD as cofactor.

Its subcellular location is the cytoplasm. The catalysed reaction is uridine(54) in tRNA + (6R)-5,10-methylene-5,6,7,8-tetrahydrofolate + NADH + H(+) = 5-methyluridine(54) in tRNA + (6S)-5,6,7,8-tetrahydrofolate + NAD(+). It catalyses the reaction uridine(54) in tRNA + (6R)-5,10-methylene-5,6,7,8-tetrahydrofolate + NADPH + H(+) = 5-methyluridine(54) in tRNA + (6S)-5,6,7,8-tetrahydrofolate + NADP(+). Catalyzes the folate-dependent formation of 5-methyl-uridine at position 54 (M-5-U54) in all tRNAs. The sequence is that of Methylenetetrahydrofolate--tRNA-(uracil-5-)-methyltransferase TrmFO from Synechococcus sp. (strain CC9311).